The sequence spans 466 residues: 3-isopropylmalate dehydratase large subunit (466 aa).

[4Fe-4S] cluster contacts are provided by Cys-347, Cys-407, and Cys-410.

It belongs to the aconitase/IPM isomerase family. LeuC type 1 subfamily. In terms of assembly, heterodimer of LeuC and LeuD. It depends on [4Fe-4S] cluster as a cofactor.

It carries out the reaction (2R,3S)-3-isopropylmalate = (2S)-2-isopropylmalate. It functions in the pathway amino-acid biosynthesis; L-leucine biosynthesis; L-leucine from 3-methyl-2-oxobutanoate: step 2/4. In terms of biological role, catalyzes the isomerization between 2-isopropylmalate and 3-isopropylmalate, via the formation of 2-isopropylmaleate. This chain is 3-isopropylmalate dehydratase large subunit, found in Pseudoalteromonas translucida (strain TAC 125).